The chain runs to 203 residues: Small ribosomal subunit protein uS7A (203 aa).

The protein belongs to the universal ribosomal protein uS7 family. In terms of assembly, component of the small ribosomal subunit (SSU). Mature yeast ribosomes consist of a small (40S) and a large (60S) subunit. The 40S small subunit contains 1 molecule of ribosomal RNA (18S rRNA) and at least 33 different proteins. The large 60S subunit contains 3 rRNA molecules (25S, 5.8S and 5S rRNA) and at least 46 different proteins.

It is found in the cytoplasm. Its subcellular location is the nucleus. It localises to the nucleolus. In terms of biological role, component of the ribosome, a large ribonucleoprotein complex responsible for the synthesis of proteins in the cell. The small ribosomal subunit (SSU) binds messenger RNAs (mRNAs) and translates the encoded message by selecting cognate aminoacyl-transfer RNA (tRNA) molecules. The large subunit (LSU) contains the ribosomal catalytic site termed the peptidyl transferase center (PTC), which catalyzes the formation of peptide bonds, thereby polymerizing the amino acids delivered by tRNAs into a polypeptide chain. The nascent polypeptides leave the ribosome through a tunnel in the LSU and interact with protein factors that function in enzymatic processing, targeting, and the membrane insertion of nascent chains at the exit of the ribosomal tunnel. The sequence is that of Small ribosomal subunit protein uS7A (rps5) from Schizosaccharomyces pombe (strain 972 / ATCC 24843) (Fission yeast).